A 377-amino-acid chain; its full sequence is Caspase-4 (377 aa).

Residues 1–59 are required for LPS-binding; sequence MAEDKHNKNPLKMLESLGKELISGLLDDFVEKNVLKLEEEEKKKIYDAKLQDKARVLVD. The propeptide occupies 1–80; sequence MAEDKHNKNP…VFVQTFLNID (80 aa). The 91-residue stretch at 1 to 91 folds into the CARD domain; that stretch reads MAEDKHNKNP…NSTSIKAPEE (91 aa). Position 83 is a phosphoserine (S83). Catalysis depends on residues H210 and C258. Positions 271-289 are excised as a propeptide; the sequence is SPPALADSFSQSSENLEED.

Belongs to the peptidase C14A family. In terms of assembly, heterotetramer that consists of two anti-parallel arranged heterodimers, each one formed by a 20 kDa (Caspase-4 subunit p20) and a 10 kDa (Caspase-4 subunit p10) subunit. Upon direct LPS-binding, forms large homooligomers, resulting in its activation. These oligomers are often referred to as 'non-canonical inflammasomes'. In its precursor form, interacts with TMEM214; this interaction is required for association with the endoplasmic reticulum membrane. Interacts with CASP1. Interacts with NOD2. Interacts with Serpinb1a, Serpinb1b and Serpinb1c; these interactions regulate CASP4 activity. Heterotetramer that consists of two anti-parallel arranged heterodimers, each one formed by a 20 kDa (Caspase-4 subunit p20) and a 10 kDa (Caspase-4 subunit p10) subunit. Post-translationally, in response to activation signals, undergoes autoproteolytic cleavage and activation.

It is found in the cytoplasm. The protein localises to the cytosol. It localises to the endoplasmic reticulum membrane. Its subcellular location is the mitochondrion. The protein resides in the inflammasome. It is found in the secreted. The catalysed reaction is Strict requirement for Asp at the P1 position. It has a preferred cleavage sequence of Tyr-Val-Ala-Asp-|- but also cleaves at Asp-Glu-Val-Asp-|-.. Its activity is regulated as follows. Activated by homooligomerization induced by direct binding to cytosolic LPS, in a TLR4-independent manner. In addition to LPS, CASP4/CASP11 may also be activated by oxidized phospholipid 1-palmitoyl-2-arachidonoyl- sn-glycero-3-phosphorylcholine, an oxidized phospholipid (oxPAPC), in dendritic cells, promoting adaptive immunity. The role of oxPAPC is however unclear and another report suggests that oxPAPC competes with LPS-binding and inhibits the non-canonical inflammasome in macrophages. Inflammatory caspase that acts as the effector of the non-canonical inflammasome by mediating lipopolysaccharide (LPS)-induced pyroptosis. Also indirectly activates the NLRP3 and NLRP6 inflammasomes. Acts as a thiol protease that cleaves a tetrapeptide after an Asp residue at position P1: catalyzes cleavage of CGAS, GSDMD and IL18. Effector of the non-canonical inflammasome independently of NLRP3 inflammasome and CASP1: the non-canonical inflammasome promotes pyroptosis through GSDMD cleavage without involving secretion of cytokine IL1B. In the non-canonical inflammasome, CASP4 is activated by direct binding to the lipid A moiety of LPS without the need of an upstream sensor. LPS-binding promotes CASP4 activation and CASP4-mediated cleavage of GSDMD and IL18, followed by IL18 secretion through the GSDMD pore, pyroptosis of infected cells and their extrusion into the gut lumen. Also indirectly promotes secretion of mature cytokines (IL1A and HMGB1) downstream of GSDMD-mediated pyroptosis via activation of the NLRP3 and NLRP6 inflammasomes. Involved in NLRP3-dependent CASP1 activation and IL1B secretion in response to non-canonical activators, such as UVB radiation or cholera enterotoxin. Involved in NLRP6 inflammasome-dependent activation in response to lipoteichoic acid (LTA), a cell-wall component of Gram-positive bacteria, which leads to CASP1 activation and IL1B secretion. Involved in LPS-induced IL6 secretion; this activity may not require caspase enzymatic activity. The non-canonical inflammasome is required for innate immunity to cytosolic, but not vacuolar, bacteria. Plays a crucial role in the restriction of S.typhimurium replication in colonic epithelial cells during infection. Pyroptosis limits bacterial replication, while cytokine secretion promotes the recruitment and activation of immune cells and triggers mucosal inflammation. May also act as an activator of adaptive immunity in dendritic cells, following activation by oxidized phospholipid 1-palmitoyl-2-arachidonoyl- sn-glycero-3-phosphorylcholine, an oxidized phospholipid (oxPAPC). Cleavage of GSDMD is not strictly dependent on the consensus cleavage site but depends on an exosite interface on CASP4 that recognizes and binds the Gasdermin-D, C-terminal (GSDMD-CT) part. Catalyzes cleavage and maturation of IL18; IL18 processing also depends of the exosite interface on CASP4. In contrast, it does not directly process IL1B. During non-canonical inflammasome activation, cuts CGAS and may play a role in the regulation of antiviral innate immune activation. The sequence is that of Caspase-4 (CASP4) from Bos taurus (Bovine).